The following is a 198-amino-acid chain: Probable GTP-binding protein EngB (198 aa).

Residues 22–195 enclose the EngB-type G domain; it reads NRVEVAFVGR…IDNLFLEFAT (174 aa). Residues 30 to 37, 57 to 61, 75 to 78, 142 to 145, and 174 to 176 contribute to the GTP site; these read GRSNVGKS, GKTRL, DLPG, TKSD, and FSS. Residues Ser37 and Thr59 each contribute to the Mg(2+) site.

Belongs to the TRAFAC class TrmE-Era-EngA-EngB-Septin-like GTPase superfamily. EngB GTPase family. Mg(2+) is required as a cofactor.

Its function is as follows. Necessary for normal cell division and for the maintenance of normal septation. This is Probable GTP-binding protein EngB from Clostridium beijerinckii (strain ATCC 51743 / NCIMB 8052) (Clostridium acetobutylicum).